Consider the following 249-residue polypeptide: Uridylate kinase (249 aa).

Lysine 16–glycine 19 serves as a coordination point for ATP. Glycine 57 contributes to the UMP binding site. ATP-binding residues include glycine 58 and arginine 62. Residues aspartate 77 and alanine 138–threonine 145 each bind UMP. Residues asparagine 166, tyrosine 172, and aspartate 175 each contribute to the ATP site.

Belongs to the UMP kinase family. In terms of assembly, homohexamer.

Its subcellular location is the cytoplasm. The enzyme catalyses UMP + ATP = UDP + ADP. It participates in pyrimidine metabolism; CTP biosynthesis via de novo pathway; UDP from UMP (UMPK route): step 1/1. Inhibited by UTP. Its function is as follows. Catalyzes the reversible phosphorylation of UMP to UDP. The chain is Uridylate kinase from Bifidobacterium adolescentis (strain ATCC 15703 / DSM 20083 / NCTC 11814 / E194a).